Consider the following 392-residue polypeptide: UPF0229 protein CPF_1540 (392 aa).

Positions 75–100 (VTTGTGEERRGDRISSDKRKAISNNK) are disordered. Residues 80–94 (GEERRGDRISSDKRK) are compositionally biased toward basic and acidic residues.

Belongs to the UPF0229 family.

This Clostridium perfringens (strain ATCC 13124 / DSM 756 / JCM 1290 / NCIMB 6125 / NCTC 8237 / Type A) protein is UPF0229 protein CPF_1540.